The following is a 417-amino-acid chain: Serine hydroxymethyltransferase (417 aa).

Residues Leu122 and Gly126–Leu128 contribute to the (6S)-5,6,7,8-tetrahydrofolate site. Residue Lys230 is modified to N6-(pyridoxal phosphate)lysine. (6S)-5,6,7,8-tetrahydrofolate is bound at residue Ser355–Phe357.

It belongs to the SHMT family. Homodimer. Pyridoxal 5'-phosphate is required as a cofactor.

It localises to the cytoplasm. The catalysed reaction is (6R)-5,10-methylene-5,6,7,8-tetrahydrofolate + glycine + H2O = (6S)-5,6,7,8-tetrahydrofolate + L-serine. The protein operates within one-carbon metabolism; tetrahydrofolate interconversion. It functions in the pathway amino-acid biosynthesis; glycine biosynthesis; glycine from L-serine: step 1/1. Catalyzes the reversible interconversion of serine and glycine with tetrahydrofolate (THF) serving as the one-carbon carrier. This reaction serves as the major source of one-carbon groups required for the biosynthesis of purines, thymidylate, methionine, and other important biomolecules. Also exhibits THF-independent aldolase activity toward beta-hydroxyamino acids, producing glycine and aldehydes, via a retro-aldol mechanism. This Francisella philomiragia subsp. philomiragia (strain ATCC 25017 / CCUG 19701 / FSC 153 / O#319-036) protein is Serine hydroxymethyltransferase.